The following is a 146-amino-acid chain: Snaclec agkicetin-C subunit beta (146 aa).

Positions 1-23 (MGRFIFVSFGLLVVFLSLSGTGA) are cleaved as a signal peptide. Cystine bridges form between Cys25-Cys36, Cys53-Cys142, and Cys119-Cys134. Positions 32-143 (YEGNCYLVVK…CSRTQPFVCK (112 aa)) constitute a C-type lectin domain.

This sequence belongs to the snaclec family. Heterodimer of subunits alpha and beta; disulfide-linked. Expressed by the venom gland.

It is found in the secreted. Its function is as follows. Is a potent glycoprotein Ibalpha (GP1BA) antagonist. Concentration-dependently inhibits botrocetin-, ristocetin- and low dose thrombin-induced platelet aggregation. Inhibits platelet adhesion only through inhibiting the vWF interaction with GP1BA, but has minimal effect on other platelet receptors, such as alpha-IIb/beta-3 (ITGA2B/ITGB3) or alpha-2/beta-1 (ITGA2/ITGB1). Causes an instant severe thrombocytopenia in rats and is not lethal to mice. In Deinagkistrodon acutus (Hundred-pace snake), this protein is Snaclec agkicetin-C subunit beta.